Reading from the N-terminus, the 489-residue chain is E3 ubiquitin-protein ligase RGLG1 (489 aa).

Residues 1 to 10 show a composition bias toward basic and acidic residues; sequence MGGGNSKEES. The disordered stretch occupies residues 1-125; the sequence is MGGGNSKEES…SQSQVADRKK (125 aa). Glycine 2 is lipidated: N-myristoyl glycine. Residues 11–23 are compositionally biased toward low complexity; the sequence is SSPSSSSWASHQS. Residues 34-57 show a composition bias toward pro residues; it reads YPPPPTYAPAPSPAPAPAPVPAPS. Residues 58-75 are compositionally biased toward low complexity; the sequence is PASSYGPQYSQEGYASQP. Over residues 76-88 the composition is skewed to pro residues; that stretch reads NNPPPPTYAPAPS. The region spanning 156–376 is the VWFA domain; it reads NLIVGIDFTK…KETEFALSAL (221 aa). The RING-type zinc-finger motif lies at 446–479; it reads CPICLSNPKNMAFGCGHQTCCECGPDLKVCPICR.

Interacts with the heterodimer UBC35/UEV1B. Interacts with ERF053. Interacts with PP2CA. Post-translationally, N-myristoylated. Ubiquitously expressed.

It is found in the cell membrane. The protein localises to the nucleus. It carries out the reaction S-ubiquitinyl-[E2 ubiquitin-conjugating enzyme]-L-cysteine + [acceptor protein]-L-lysine = [E2 ubiquitin-conjugating enzyme]-L-cysteine + N(6)-ubiquitinyl-[acceptor protein]-L-lysine.. In terms of biological role, E3 ubiquitin-protein ligase that mediates the formation of 'Lys-63'-linked ubiquitin chains. Regulates apical dominance by acting on the auxin transport proteins abundance. Together with RGLG5, mediates the ubiquitination and subsequent proteasomal degradation of the target protein PP2CA. Functions as a positive regulator of abscisic acid (ABA) signaling through ABA-dependent degradation of PP2CA, a major inhibitor of ABA signaling. Acts as a negative regulator of drought stress response. In Arabidopsis thaliana (Mouse-ear cress), this protein is E3 ubiquitin-protein ligase RGLG1.